Consider the following 312-residue polypeptide: Pre-mRNA-splicing factor 38A (312 aa).

The tract at residues 1-179 (MANRTVKDAH…VLEEAEQLEP (179 aa)) is N-terminal protein interaction domain. 5 positions are modified to phosphoserine: serine 11, serine 193, serine 194, serine 209, and serine 226. Positions 170-204 (VLEEAEQLEPRVSALEEDMDDVESSEEEEEEDEKL) form a coiled coil. Residues 181–312 (VSALEEDMDD…SHKKSRRGNE (132 aa)) are disordered. Positions 184–202 (LEEDMDDVESSEEEEEEDE) are enriched in acidic residues. Residues 203–224 (KLERVPSPDHRRRSYRDLDKPR) are compositionally biased toward basic and acidic residues. Composition is skewed to basic residues over residues 225-294 (RSPT…RSHS) and 301-312 (KKSHKKSRRGNE).

This sequence belongs to the PRP38 family. In terms of assembly, component of the spliceosome B complex. Interacts (via N-terminal interaction domain) with ZMAT2 and MFAP1.

It is found in the nucleus. Involved in pre-mRNA splicing as a component of the spliceosome. The chain is Pre-mRNA-splicing factor 38A (PRPF38A) from Bos taurus (Bovine).